Reading from the N-terminus, the 85-residue chain is Large ribosomal subunit protein eL34 (85 aa).

It belongs to the eukaryotic ribosomal protein eL34 family.

The protein is Large ribosomal subunit protein eL34 of Saccharolobus islandicus (strain M.16.27) (Sulfolobus islandicus).